A 257-amino-acid polypeptide reads, in one-letter code: Septu protein PtuB (257 aa).

An HNH domain is found at 49 to 96; it reads CVYCECRLDEESKYMEVEHFLPKDTYPNLVVNWRNLLPSCKRCNGKKG.

In terms of biological role, component of antiviral defense system Septu type I, composed of PtuA and PtuB. Expression of Septu type I in B.subtilis (strain BEST7003) confers resistance to phages SBSphiC and SBSphiJ. May be a nuclease. This chain is Septu protein PtuB, found in Bacillus thuringiensis.